Reading from the N-terminus, the 195-residue chain is 4'-phosphopantetheinyl transferase AcpT (195 aa).

The protein belongs to the P-Pant transferase superfamily. Gsp/Sfp/HetI/AcpT family.

It catalyses the reaction apo-[ACP] + CoA = holo-[ACP] + adenosine 3',5'-bisphosphate + H(+). Functionally, may be involved in an alternative pathway for phosphopantetheinyl transfer and holo-ACP synthesis in E.coli. The native apo-protein substrate is unknown. Is able to functionally replace AcpS in vivo but only when expressed at high levels. This Escherichia coli (strain K12) protein is 4'-phosphopantetheinyl transferase AcpT.